A 37-amino-acid chain; its full sequence is Large ribosomal subunit protein bL36 (37 aa).

Belongs to the bacterial ribosomal protein bL36 family.

The sequence is that of Large ribosomal subunit protein bL36 from Polaromonas naphthalenivorans (strain CJ2).